A 612-amino-acid polypeptide reads, in one-letter code: Dihydroxy-acid dehydratase (612 aa).

Asp81 contacts Mg(2+). Cys122 is a [2Fe-2S] cluster binding site. 2 residues coordinate Mg(2+): Asp123 and Lys124. At Lys124 the chain carries N6-carboxylysine. Cys195 lines the [2Fe-2S] cluster pocket. A Mg(2+)-binding site is contributed by Glu491. The active-site Proton acceptor is the Ser517.

Belongs to the IlvD/Edd family. As to quaternary structure, homodimer. [2Fe-2S] cluster is required as a cofactor. Mg(2+) serves as cofactor.

The catalysed reaction is (2R)-2,3-dihydroxy-3-methylbutanoate = 3-methyl-2-oxobutanoate + H2O. It catalyses the reaction (2R,3R)-2,3-dihydroxy-3-methylpentanoate = (S)-3-methyl-2-oxopentanoate + H2O. It participates in amino-acid biosynthesis; L-isoleucine biosynthesis; L-isoleucine from 2-oxobutanoate: step 3/4. It functions in the pathway amino-acid biosynthesis; L-valine biosynthesis; L-valine from pyruvate: step 3/4. Its function is as follows. Functions in the biosynthesis of branched-chain amino acids. Catalyzes the dehydration of (2R,3R)-2,3-dihydroxy-3-methylpentanoate (2,3-dihydroxy-3-methylvalerate) into 2-oxo-3-methylpentanoate (2-oxo-3-methylvalerate) and of (2R)-2,3-dihydroxy-3-methylbutanoate (2,3-dihydroxyisovalerate) into 2-oxo-3-methylbutanoate (2-oxoisovalerate), the penultimate precursor to L-isoleucine and L-valine, respectively. This chain is Dihydroxy-acid dehydratase, found in Buchnera aphidicola subsp. Baizongia pistaciae (strain Bp).